Reading from the N-terminus, the 726-residue chain is Catalase-peroxidase (726 aa).

A cross-link (tryptophyl-tyrosyl-methioninium (Trp-Tyr) (with M-240)) is located at residues 91 to 214; it reads WHSAGTYRIA…LGAVQMGLIY (124 aa). The active-site Proton acceptor is His-92. A cross-link (tryptophyl-tyrosyl-methioninium (Tyr-Met) (with W-91)) is located at residues 214 to 240; the sequence is YVNPEGPNGNPDPLAAARDIRETFARM. Heme b is bound at residue His-255. The tract at residues 335 to 362 is disordered; it reads AHQWRPKAGAGADSVPDPHDPNKRRTPS.

The protein belongs to the peroxidase family. Peroxidase/catalase subfamily. In terms of assembly, homodimer or homotetramer. Heme b serves as cofactor. Post-translationally, formation of the three residue Trp-Tyr-Met cross-link is important for the catalase, but not the peroxidase activity of the enzyme.

It catalyses the reaction H2O2 + AH2 = A + 2 H2O. The enzyme catalyses 2 H2O2 = O2 + 2 H2O. In terms of biological role, bifunctional enzyme with both catalase and broad-spectrum peroxidase activity. The protein is Catalase-peroxidase of Pseudomonas fluorescens (strain ATCC BAA-477 / NRRL B-23932 / Pf-5).